The primary structure comprises 336 residues: Cellodextrinase A (336 aa).

The Proton donor role is filled by Glu-141.

The protein belongs to the glycosyl hydrolase 5 (cellulase A) family.

The protein resides in the secreted. Functionally, crystalline cellulose degradation. The polypeptide is Cellodextrinase A (celA) (Ruminococcus flavefaciens).